Reading from the N-terminus, the 152-residue chain is Gamma-glutamylaminecyclotransferase C (152 aa).

9 to 12 (YGSL) is a binding site for substrate. Glu84 serves as the catalytic Proton acceptor.

It belongs to the gamma-glutamylcyclotransferase family.

The catalysed reaction is epsilon-(gamma-L-glutamyl)-L-lysine = 5-oxo-L-proline + L-lysine. Its function is as follows. May contribute to degradation of proteins cross-linked by transglutaminases by degrading the cross-link between a lysine and a glutamic acid residue. Catalyzes the formation of 5-oxo-L-proline from L-gamma-glutamyl-L-epsilon-lysine. This is Gamma-glutamylaminecyclotransferase C (ggact.3) from Danio rerio (Zebrafish).